Here is a 165-residue protein sequence, read N- to C-terminus: Phosphopantetheine adenylyltransferase (165 aa).

Residue Ser10 participates in substrate binding. ATP contacts are provided by residues 10–11 (SF) and His18. Substrate is bound by residues Lys42, Thr79, and Arg93. Residues 94-96 (GLR), Glu104, and 129-135 (VRPITAT) contribute to the ATP site.

Belongs to the bacterial CoaD family. As to quaternary structure, homohexamer. Mg(2+) serves as cofactor.

Its subcellular location is the cytoplasm. It carries out the reaction (R)-4'-phosphopantetheine + ATP + H(+) = 3'-dephospho-CoA + diphosphate. The protein operates within cofactor biosynthesis; coenzyme A biosynthesis; CoA from (R)-pantothenate: step 4/5. In terms of biological role, reversibly transfers an adenylyl group from ATP to 4'-phosphopantetheine, yielding dephospho-CoA (dPCoA) and pyrophosphate. This is Phosphopantetheine adenylyltransferase from Rhodopseudomonas palustris (strain BisA53).